The following is a 104-amino-acid chain: Co-chaperonin GroES 2 (104 aa).

Belongs to the GroES chaperonin family. In terms of assembly, heptamer of 7 subunits arranged in a ring. Interacts with the chaperonin GroEL.

Its subcellular location is the cytoplasm. In terms of biological role, together with the chaperonin GroEL, plays an essential role in assisting protein folding. The GroEL-GroES system forms a nano-cage that allows encapsulation of the non-native substrate proteins and provides a physical environment optimized to promote and accelerate protein folding. GroES binds to the apical surface of the GroEL ring, thereby capping the opening of the GroEL channel. The chain is Co-chaperonin GroES 2 from Mesorhizobium japonicum (strain LMG 29417 / CECT 9101 / MAFF 303099) (Mesorhizobium loti (strain MAFF 303099)).